The primary structure comprises 90 residues: Probable Fe(2+)-trafficking protein (90 aa).

The protein belongs to the Fe(2+)-trafficking protein family.

In terms of biological role, could be a mediator in iron transactions between iron acquisition and iron-requiring processes, such as synthesis and/or repair of Fe-S clusters in biosynthetic enzymes. This Coxiella burnetii (strain CbuK_Q154) (Coxiella burnetii (strain Q154)) protein is Probable Fe(2+)-trafficking protein.